A 644-amino-acid chain; its full sequence is MATTAAAAAAALSAAATAKTGRKNHQRHHVLPARGRVGAAAVRCSAVSPVTPPSPAPPATPLRPWGPAEPRKGADILVEALERCGVSDVFAYPGGASMEIHQALTRSPVITNHLFRHEQGEAFAASGYARASGRVGVCVATSGPGATNLVSALADALLDSVPMVAITGQVPRRMIGTDAFQETPIVEVTRSITKHNYLVLDVEDIPRVIQEAFFLASSGRPGPVLVDIPKDIQQQMAVPVWDTSMNLPGYIARLPKPPATELLEQVLRLVGESRRPILYVGGGCSASGDELRWFVELTGIPVTTTLMGLGNFPSDDPLSLRMLGMHGTVYANYAVDKADLLLAFGVRFDDRVTGKIEAFASRAKIVHIDIDPAEIGKNKQPHVSICADVKLALQGLNALLQQSTTKTSSDFSAWHNELDQQKREFPLGYKTFGEEIPPQYAIQVLDELTKGEAIIATGVGQHQMWAAQYYTYKRPRQWLSSAGLGAMGFGLPAAAGASVANPGVTVVDIDGDGSFLMNIQELALIRIENLPVKVMVLNNQHLGMVVQWEDRFYKANRAHTYLGNPECESEIYPDFVTIAKGFNIPAVRVTKKSEVRAAIKKMLETPGPYLLDIIVPHQEHVLPMIPSGGAFKDMILDGDGRTVY.

The transit peptide at methionine 1–arginine 43 directs the protein to the chloroplast. Residues valine 47 to proline 67 form a disordered region. Pro residues predominate over residues valine 50–proline 61. Residue glutamate 118 participates in thiamine diphosphate binding. A disulfide bridge links cysteine 138 with cysteine 284. FAD-binding positions include arginine 220, histidine 326–arginine 347, and aspartate 369–aspartate 388. A thiamine pyrophosphate binding region spans residues glutamine 461 to histidine 541. 2 residues coordinate Mg(2+): aspartate 512 and asparagine 539.

Belongs to the TPP enzyme family. The cofactor is Mg(2+). Thiamine diphosphate is required as a cofactor.

It is found in the plastid. Its subcellular location is the chloroplast. The enzyme catalyses 2 pyruvate + H(+) = (2S)-2-acetolactate + CO2. The protein operates within amino-acid biosynthesis; L-isoleucine biosynthesis; L-isoleucine from 2-oxobutanoate: step 1/4. Its pathway is amino-acid biosynthesis; L-valine biosynthesis; L-valine from pyruvate: step 1/4. In Oryza sativa subsp. japonica (Rice), this protein is Acetolactate synthase 1, chloroplastic (ALS1).